The chain runs to 732 residues: MERQVLLSEPQEAAALYRGLSRQPSLSAACLGPEVTTQYGGLYRTVHTEWTQRDLERMENIRFCRQYLVFHDGDSVVFAGPAGNSVETRGELLSRESPSGTMKAVLRKAGGTVSGEEKQFLEVWEKNRKLKSFNLSALEKHGPVYEDDCFGCLSWSHSETHLLYVAEKKRPKAESFFQTKALDISASDDEMARPKKPDQAIKGDQFVFYEDWGETMVSKSIPVLCVLDIDSGNISVLEGVPENVSPGQAFWAPGDTGVVFVGWWHEPFRLGIRYCTNRRSALYYVDLSGGKCELLSDGSLAICSPRLSPDQCRIVYLQYPCLAPHHQCSQLCLYDWYTKVTSVVVDIVPRQLGESFSGIYCSLLPLGCWSADSQRVVFDSAQRSRQDLFAVDTQTGSITSLTAAGSAGSWKLLTIDKDLMVAQFSTPSLPPSLKVGFLPPPGKEQSVSWVSLEEAEPIPGIHWGVRVLHPPPDQENVQYADLDFEAILLQPSNPPDKTQVPMVVMPHGGPHSSFVTAWMLFPAMLCKMGFAVLLVNYRGSTGFGQDSILSLPGNVGHQDVKDVQFAVEQVLQEEHFDARRVALMGGSHGGFLSCHLIGQYPETYSACIARNPVINIASMMGSTDIPDWCMVETGFPYSNSCLPDLNVWEEMLDKSPIKYIPQVKTPVLLMLGQEDRRVPFKQGMEYYRALKARNVPVRLLLYPKSNHALSEVEAESDSFMNAVLWLHTHLGS.

A Blocked amino end (Met); alternate modification is found at M1. M1 is subject to N-acetylmethionine; alternate. A phosphoserine mark is found at S185 and S187. Residues S587, D675, and H707 each act as charge relay system in the active site.

The protein belongs to the peptidase S9C family. As to quaternary structure, homotetramer.

Its subcellular location is the cytoplasm. The catalysed reaction is Cleavage of an N-acetyl or N-formyl amino acid from the N-terminus of a polypeptide.. Homotetramerization is required for activity. Tetramerization results in the formation of a gated channel which is involved in substrate selection and substrate access to the catalytic sites. Its function is as follows. This enzyme catalyzes the hydrolysis of the N-terminal peptide bond of an N-acetylated peptide to generate an N-acetylated amino acid and a peptide with a free N-terminus. It preferentially cleaves off Ac-Ala, Ac-Met and Ac-Ser. Also, involved in the degradation of oxidized and glycated proteins. This is Acylamino-acid-releasing enzyme (Apeh) from Rattus norvegicus (Rat).